We begin with the raw amino-acid sequence, 200 residues long: Recombination protein RecR (200 aa).

Residues Cys-58 to Cys-75 form a C4-type zinc finger. Residues Ser-82–Pro-177 form the Toprim domain.

Belongs to the RecR family.

Its function is as follows. May play a role in DNA repair. It seems to be involved in an RecBC-independent recombinational process of DNA repair. It may act with RecF and RecO. In Chlamydia felis (strain Fe/C-56) (Chlamydophila felis), this protein is Recombination protein RecR.